The sequence spans 130 residues: Small ribosomal subunit protein uS8 (130 aa).

Belongs to the universal ribosomal protein uS8 family. Part of the 30S ribosomal subunit. Contacts proteins S5 and S12.

One of the primary rRNA binding proteins, it binds directly to 16S rRNA central domain where it helps coordinate assembly of the platform of the 30S subunit. The sequence is that of Small ribosomal subunit protein uS8 from Acidiphilium cryptum (strain JF-5).